A 92-amino-acid polypeptide reads, in one-letter code: Small ribosomal subunit protein uS19 (92 aa).

This sequence belongs to the universal ribosomal protein uS19 family.

Its function is as follows. Protein S19 forms a complex with S13 that binds strongly to the 16S ribosomal RNA. In Hyphomonas neptunium (strain ATCC 15444), this protein is Small ribosomal subunit protein uS19.